Reading from the N-terminus, the 344-residue chain is Heat-inducible transcription repressor HrcA (344 aa).

It belongs to the HrcA family.

Functionally, negative regulator of class I heat shock genes (grpE-dnaK-dnaJ and groELS operons). Prevents heat-shock induction of these operons. The chain is Heat-inducible transcription repressor HrcA from Streptococcus pyogenes serotype M1.